The primary structure comprises 414 residues: Multifunctional CCA protein (414 aa).

ATP is bound by residues glycine 8 and arginine 11. Glycine 8 and arginine 11 together coordinate CTP. Mg(2+)-binding residues include glutamate 21 and aspartate 23. ATP-binding residues include arginine 91, arginine 137, and arginine 140. 3 residues coordinate CTP: arginine 91, arginine 137, and arginine 140. In terms of domain architecture, HD spans 228–329; that stretch reads TGIHTMMTVA…LKLFDAIDVW (102 aa).

The protein belongs to the tRNA nucleotidyltransferase/poly(A) polymerase family. Bacterial CCA-adding enzyme type 1 subfamily. In terms of assembly, monomer. Can also form homodimers and oligomers. Mg(2+) serves as cofactor. The cofactor is Ni(2+).

It catalyses the reaction a tRNA precursor + 2 CTP + ATP = a tRNA with a 3' CCA end + 3 diphosphate. It carries out the reaction a tRNA with a 3' CCA end + 2 CTP + ATP = a tRNA with a 3' CCACCA end + 3 diphosphate. In terms of biological role, catalyzes the addition and repair of the essential 3'-terminal CCA sequence in tRNAs without using a nucleic acid template. Adds these three nucleotides in the order of C, C, and A to the tRNA nucleotide-73, using CTP and ATP as substrates and producing inorganic pyrophosphate. tRNA 3'-terminal CCA addition is required both for tRNA processing and repair. Also involved in tRNA surveillance by mediating tandem CCA addition to generate a CCACCA at the 3' terminus of unstable tRNAs. While stable tRNAs receive only 3'-terminal CCA, unstable tRNAs are marked with CCACCA and rapidly degraded. The sequence is that of Multifunctional CCA protein from Pectobacterium carotovorum subsp. carotovorum (strain PC1).